We begin with the raw amino-acid sequence, 2034 residues long: Sperm vesicle fusion protein fer-1 (2034 aa).

The interval 1 to 80 is disordered; sequence MTVKEKLLKV…GGSDIELLPD (80 aa). Over 1 to 1998 the chain is Cytoplasmic; sequence MTVKEKLLKV…CIKYFWHYYG (1998 aa). Positions 66–79 are enriched in acidic residues; sequence ELSDDGGSDIELLP. C2 domains follow at residues 229-367, 954-1082, 1120-1246, and 1363-1484; these read RIDE…YLPT, DSED…PQWF, YKER…KSDH, and KKGK…ATGG. The interval 1563 to 1619 is disordered; that stretch reads QKAGKENFSDGSDQQNEDVSDGSWDEEDLEREKEKLKWEKHRSKGKPLKKVTTEKAE. Positions 1577 to 1591 are enriched in acidic residues; sequence QNEDVSDGSWDEEDL. Residues 1600–1611 are compositionally biased toward basic residues; the sequence is WEKHRSKGKPLK. The region spanning 1684–1831 is the C2 5 domain; that stretch reads EYGAIPAPFN…EGIGSPSDVG (148 aa). The segment at 1953-1972 is disordered; the sequence is QEPAGKKRSEPNHSPFLEKP. Residues 1999–2019 traverse the membrane as a helical segment; it reads LQILLWLIIIVILILTIFVLL. The Extracellular portion of the chain corresponds to 2020–2034; it reads HTWPTILAEIIKAIF.

It belongs to the ferlin family. In terms of tissue distribution, exclusively expressed in the testis.

It is found in the membrane. Functionally, required for the fusion of the membranous organelles (MOs) with the plasma membrane, a process essential in spermiogenesis. This chain is Sperm vesicle fusion protein fer-1 (fer-1), found in Caenorhabditis elegans.